Here is a 332-residue protein sequence, read N- to C-terminus: Phosphatidylglycerol--prolipoprotein diacylglyceryl transferase (332 aa).

The next 3 membrane-spanning stretches (helical) occupy residues 18 to 38 (FPYFRWYGFMYVVAFSIAYIL), 66 to 86 (FFTWTILGILIGARVFSTMVY), and 111 to 131 (VGLRGMSYHGGLIGALVGGGL). Arg-159 contributes to the a 1,2-diacyl-sn-glycero-3-phospho-(1'-sn-glycerol) binding site. The next 2 helical transmembrane spans lie at 249–269 (GFLVCLYVVGYGVFRFFIEYF) and 302–322 (ILCVLMILAGLGGMFALSAYH).

It belongs to the Lgt family.

The protein localises to the cell inner membrane. It catalyses the reaction L-cysteinyl-[prolipoprotein] + a 1,2-diacyl-sn-glycero-3-phospho-(1'-sn-glycerol) = an S-1,2-diacyl-sn-glyceryl-L-cysteinyl-[prolipoprotein] + sn-glycerol 1-phosphate + H(+). The protein operates within protein modification; lipoprotein biosynthesis (diacylglyceryl transfer). In terms of biological role, catalyzes the transfer of the diacylglyceryl group from phosphatidylglycerol to the sulfhydryl group of the N-terminal cysteine of a prolipoprotein, the first step in the formation of mature lipoproteins. This Treponema pallidum (strain Nichols) protein is Phosphatidylglycerol--prolipoprotein diacylglyceryl transferase.